A 187-amino-acid chain; its full sequence is Oligoribonuclease (187 aa).

The region spanning 7-170 (LCWLDMEMTG…DDILESIEEM (164 aa)) is the Exonuclease domain. Tyr-128 is an active-site residue.

The protein belongs to the oligoribonuclease family.

It localises to the cytoplasm. In terms of biological role, 3'-to-5' exoribonuclease specific for small oligoribonucleotides. The polypeptide is Oligoribonuclease (Neisseria meningitidis serogroup C / serotype 2a (strain ATCC 700532 / DSM 15464 / FAM18)).